Reading from the N-terminus, the 710-residue chain is Early transcription factor 82 kDa subunit (710 aa).

The protein belongs to the poxviridae VETF large subunit family. In terms of assembly, heterodimer of a 70 kDa and a 82 kDa subunit. Part of the early transcription complex composed of ETF, RAP94/OPG109, and the DNA-directed RNA polymerase.

It is found in the virion. Acts with RNA polymerase to initiate transcription from early gene promoters. Is recruited by the RPO-associated protein of 94 kDa RAP94/OPG109 to form the early transcription complex, which also contains the core RNA polymerase. ETF heterodimer binds to early gene promoters. This chain is Early transcription factor 82 kDa subunit (OPG133), found in Homo sapiens (Human).